Reading from the N-terminus, the 229-residue chain is PKHD-type hydroxylase BRADO6316 (229 aa).

In terms of domain architecture, Fe2OG dioxygenase spans 78 to 180; that stretch reads QIFPPLFNRY…RVASFFWLQS (103 aa). The Fe cation site is built by H98, D100, and H161. R171 is a 2-oxoglutarate binding site.

Fe(2+) serves as cofactor. It depends on L-ascorbate as a cofactor.

The chain is PKHD-type hydroxylase BRADO6316 from Bradyrhizobium sp. (strain ORS 278).